Here is a 58-residue protein sequence, read N- to C-terminus: uncharacterized protein (58 aa).

2 consecutive 4Fe-4S ferredoxin-type domains span residues 2 to 27 (GIKI…IKTY) and 28 to 57 (GVAI…VDTS). Residues C9, C12, C15, C19, C37, C40, C43, and C47 each contribute to the [4Fe-4S] cluster site.

The cofactor is [4Fe-4S] cluster.

In terms of biological role, ferredoxins are iron-sulfur proteins that transfer electrons probably in the CO-dehydrogenase complex. This is an uncharacterized protein from Methanocaldococcus jannaschii (strain ATCC 43067 / DSM 2661 / JAL-1 / JCM 10045 / NBRC 100440) (Methanococcus jannaschii).